A 680-amino-acid polypeptide reads, in one-letter code: DNA ligase (680 aa).

NAD(+) is bound by residues Asp-35 to Asp-39, Ser-86 to Leu-87, and Glu-111. The active-site N6-AMP-lysine intermediate is the Lys-113. NAD(+) is bound by residues Arg-134, Glu-174, Lys-290, and Lys-314. Zn(2+) contacts are provided by Cys-408, Cys-411, Cys-427, and Cys-433. Residues Val-597 to Glu-680 form the BRCT domain.

This sequence belongs to the NAD-dependent DNA ligase family. LigA subfamily. The cofactor is Mg(2+). Requires Mn(2+) as cofactor.

The enzyme catalyses NAD(+) + (deoxyribonucleotide)n-3'-hydroxyl + 5'-phospho-(deoxyribonucleotide)m = (deoxyribonucleotide)n+m + AMP + beta-nicotinamide D-nucleotide.. In terms of biological role, DNA ligase that catalyzes the formation of phosphodiester linkages between 5'-phosphoryl and 3'-hydroxyl groups in double-stranded DNA using NAD as a coenzyme and as the energy source for the reaction. It is essential for DNA replication and repair of damaged DNA. This is DNA ligase from Corynebacterium glutamicum (strain ATCC 13032 / DSM 20300 / JCM 1318 / BCRC 11384 / CCUG 27702 / LMG 3730 / NBRC 12168 / NCIMB 10025 / NRRL B-2784 / 534).